Reading from the N-terminus, the 500-residue chain is Melanopsin (500 aa).

Residues 1–65 (MSHHSSWRGH…TVDVPDHAHY (65 aa)) are Extracellular-facing. Asn18 carries an N-linked (GlcNAc...) asparagine glycan. The helical transmembrane segment at 66–86 (IIGAVILIVGITGVIGNALVI) threads the bilayer. The Cytoplasmic portion of the chain corresponds to 87-101 (YVFCRSRTLRTAGNM). The chain crosses the membrane as a helical span at residues 102-122 (FVVNLAVADFFMSLTQSPVFF). At 123-138 (AASLHRRWIFGERICE) the chain is on the extracellular side. A disulfide bridge connects residues Cys137 and Cys215. The chain crosses the membrane as a helical span at residues 139 to 159 (LYAFCGALFGICSMMTLTAIA). The Cytoplasmic segment spans residues 160-182 (ADRCLAITQPLALVGNVSRRKAG). Residues 183–203 (AVLAVVWLYSLGWSLPPFFGW) form a helical membrane-spanning segment. The Extracellular segment spans residues 204 to 232 (SAYVPEGLQTSCSWDYMTFTPSVRAYTIL). A helical membrane pass occupies residues 233–253 (LFIFVFFIPLGIIVSCYVGIF). Topologically, residues 254–286 (QAIRAMGKEIRELDCGETQKVYERMQNEWKMAK) are cytoplasmic. The helical transmembrane segment at 287–307 (IALLVILLFVISWSPYSVVAL) threads the bilayer. Topologically, residues 308–322 (TATAGYSHLLTPYMN) are extracellular. Residues 323 to 343 (SVPAVIAKASAIHNPIIYAIT) form a helical membrane-spanning segment. An N6-(retinylidene)lysine modification is found at Lys330. The Cytoplasmic portion of the chain corresponds to 344-500 (HPKYRAAIAR…DGKALLLGGN (157 aa)). Disordered stretches follow at residues 406–428 (GKKRLSSASDSDSCWTESEADGS), 448–470 (VILSPGSSNSTASGQKSEKAHKV), and 481–500 (ETDSADESLSDGKALLLGGN). 2 stretches are compositionally biased toward polar residues: residues 411–428 (SSASDSDSCWTESEADGS) and 448–462 (VILSPGSSNSTASGQ).

Belongs to the G-protein coupled receptor 1 family. Opsin subfamily. In terms of tissue distribution, expressed in a subset of retinal horizontal cells as well as in retinal ganglion cells.

The protein resides in the cell membrane. Functionally, photoreceptor implicated in non-image-forming responses to light. This Rutilus rutilus (Roach) protein is Melanopsin (opn4).